The following is a 278-amino-acid chain: Bifunctional protein FolD (278 aa).

NADP(+) is bound by residues 162–164 (GAG) and Ile-228.

This sequence belongs to the tetrahydrofolate dehydrogenase/cyclohydrolase family. In terms of assembly, homodimer.

It catalyses the reaction (6R)-5,10-methylene-5,6,7,8-tetrahydrofolate + NADP(+) = (6R)-5,10-methenyltetrahydrofolate + NADPH. It carries out the reaction (6R)-5,10-methenyltetrahydrofolate + H2O = (6R)-10-formyltetrahydrofolate + H(+). The protein operates within one-carbon metabolism; tetrahydrofolate interconversion. In terms of biological role, catalyzes the oxidation of 5,10-methylenetetrahydrofolate to 5,10-methenyltetrahydrofolate and then the hydrolysis of 5,10-methenyltetrahydrofolate to 10-formyltetrahydrofolate. The sequence is that of Bifunctional protein FolD from Hydrogenobaculum sp. (strain Y04AAS1).